Consider the following 554-residue polypeptide: Phenylalanine--tRNA ligase beta subunit (554 aa).

The B5 domain occupies leucine 276 to glycine 351. Positions 329, 335, 338, and 339 each coordinate Mg(2+).

This sequence belongs to the phenylalanyl-tRNA synthetase beta subunit family. Type 2 subfamily. As to quaternary structure, tetramer of two alpha and two beta subunits. Mg(2+) is required as a cofactor.

It is found in the cytoplasm. It catalyses the reaction tRNA(Phe) + L-phenylalanine + ATP = L-phenylalanyl-tRNA(Phe) + AMP + diphosphate + H(+). The protein is Phenylalanine--tRNA ligase beta subunit of Methanococcus maripaludis (strain DSM 14266 / JCM 13030 / NBRC 101832 / S2 / LL).